The sequence spans 595 residues: Probable serine/threonine-protein kinase fhkC (595 aa).

A disordered region spans residues 1-84; that stretch reads MNSNKEETTA…MTEDNSKEED (84 aa). Over residues 18-31 the composition is skewed to low complexity; sequence EEQQQQQQPQQQEQ. A compositionally biased stretch (polar residues) spans 32 to 49; the sequence is INTTTASTTSNGENTASD. Over residues 50-70 the composition is skewed to low complexity; sequence NNNNSNNNNNNNTNNTNTNNN. The region spanning 116–170 is the FHA domain; the sequence is IILGRSKGVCNYTFTSPTVSGKHCKIYRDPTVKSRNVAFVDDTSTNGTFINNEVI. The Protein kinase domain occupies 218-479; the sequence is YDLREVLGTG…IDQALNHPWF (262 aa). ATP-binding positions include 224 to 232 and Lys247; that span reads LGTGNFASV. Asp342 (proton acceptor) is an active-site residue. A Phosphothreonine; by autocatalysis modification is found at Thr377. The interval 494–595 is disordered; the sequence is KLEFPPPSTN…DEHEQKKVKN (102 aa). The segment covering 508–520 has biased composition (polar residues); sequence PTPNTTSSNSQLV. Residues 530–567 are compositionally biased toward low complexity; it reads DNTTDNNNNNNNNNNNNNNNNNNNTTNNSNNIDNNNGN. Over residues 585-595 the composition is skewed to basic and acidic residues; sequence NDEHEQKKVKN.

The protein belongs to the protein kinase superfamily. CAMK Ser/Thr protein kinase family. CHK2 subfamily.

The enzyme catalyses L-seryl-[protein] + ATP = O-phospho-L-seryl-[protein] + ADP + H(+). It carries out the reaction L-threonyl-[protein] + ATP = O-phospho-L-threonyl-[protein] + ADP + H(+). This Dictyostelium discoideum (Social amoeba) protein is Probable serine/threonine-protein kinase fhkC (fhkC).